A 362-amino-acid polypeptide reads, in one-letter code: Chorismate synthase (362 aa).

Arg46 is an NADP(+) binding site. Residues 122-124 (RSS), 238-239 (NA), Gly278, 293-297 (KPTPS), and Arg319 each bind FMN.

Belongs to the chorismate synthase family. Homotetramer. It depends on FMNH2 as a cofactor.

It catalyses the reaction 5-O-(1-carboxyvinyl)-3-phosphoshikimate = chorismate + phosphate. The protein operates within metabolic intermediate biosynthesis; chorismate biosynthesis; chorismate from D-erythrose 4-phosphate and phosphoenolpyruvate: step 7/7. Functionally, catalyzes the anti-1,4-elimination of the C-3 phosphate and the C-6 proR hydrogen from 5-enolpyruvylshikimate-3-phosphate (EPSP) to yield chorismate, which is the branch point compound that serves as the starting substrate for the three terminal pathways of aromatic amino acid biosynthesis. This reaction introduces a second double bond into the aromatic ring system. The polypeptide is Chorismate synthase (Campylobacter jejuni subsp. jejuni serotype O:6 (strain 81116 / NCTC 11828)).